The chain runs to 167 residues: Phosphopantetheine adenylyltransferase (167 aa).

Ser-11 serves as a coordination point for substrate. ATP contacts are provided by residues 11–12 (SF) and His-19. Lys-43, Thr-76, and Arg-90 together coordinate substrate. ATP is bound by residues 91 to 93 (GIR), Glu-101, and 126 to 132 (YDALSST).

It belongs to the bacterial CoaD family. As to quaternary structure, homohexamer. Requires Mg(2+) as cofactor.

It localises to the cytoplasm. The catalysed reaction is (R)-4'-phosphopantetheine + ATP + H(+) = 3'-dephospho-CoA + diphosphate. It functions in the pathway cofactor biosynthesis; coenzyme A biosynthesis; CoA from (R)-pantothenate: step 4/5. Reversibly transfers an adenylyl group from ATP to 4'-phosphopantetheine, yielding dephospho-CoA (dPCoA) and pyrophosphate. In Lacticaseibacillus paracasei (strain ATCC 334 / BCRC 17002 / CCUG 31169 / CIP 107868 / KCTC 3260 / NRRL B-441) (Lactobacillus paracasei), this protein is Phosphopantetheine adenylyltransferase.